We begin with the raw amino-acid sequence, 303 residues long: Putative S-adenosyl-L-methionine-dependent methyltransferase MAP_4197c (303 aa).

S-adenosyl-L-methionine contacts are provided by residues aspartate 129 and 158-159; that span reads DL.

It belongs to the UPF0677 family.

Exhibits S-adenosyl-L-methionine-dependent methyltransferase activity. In Mycolicibacterium paratuberculosis (strain ATCC BAA-968 / K-10) (Mycobacterium paratuberculosis), this protein is Putative S-adenosyl-L-methionine-dependent methyltransferase MAP_4197c.